The chain runs to 501 residues: Phenylalanine--tRNA ligase alpha subunit (501 aa).

Residues T340 and F423 each contribute to the L-phenylalanine site. E425 contacts Mg(2+). F448 lines the L-phenylalanine pocket.

It belongs to the class-II aminoacyl-tRNA synthetase family. Phe-tRNA synthetase alpha subunit type 2 subfamily. In terms of assembly, tetramer of two alpha and two beta subunits. Mg(2+) serves as cofactor.

The protein localises to the cytoplasm. The enzyme catalyses tRNA(Phe) + L-phenylalanine + ATP = L-phenylalanyl-tRNA(Phe) + AMP + diphosphate + H(+). The protein is Phenylalanine--tRNA ligase alpha subunit of Methanococcus maripaludis (strain C5 / ATCC BAA-1333).